Here is a 293-residue protein sequence, read N- to C-terminus: 4-hydroxy-tetrahydrodipicolinate synthase (293 aa).

Thr-45 serves as a coordination point for pyruvate. Tyr-133 (proton donor/acceptor) is an active-site residue. The Schiff-base intermediate with substrate role is filled by Lys-161. Ile-203 is a pyruvate binding site.

The protein belongs to the DapA family. In terms of assembly, homotetramer; dimer of dimers.

The protein localises to the cytoplasm. The catalysed reaction is L-aspartate 4-semialdehyde + pyruvate = (2S,4S)-4-hydroxy-2,3,4,5-tetrahydrodipicolinate + H2O + H(+). The protein operates within amino-acid biosynthesis; L-lysine biosynthesis via DAP pathway; (S)-tetrahydrodipicolinate from L-aspartate: step 3/4. Functionally, catalyzes the condensation of (S)-aspartate-beta-semialdehyde [(S)-ASA] and pyruvate to 4-hydroxy-tetrahydrodipicolinate (HTPA). This Syntrophotalea carbinolica (strain DSM 2380 / NBRC 103641 / GraBd1) (Pelobacter carbinolicus) protein is 4-hydroxy-tetrahydrodipicolinate synthase.